Reading from the N-terminus, the 73-residue chain is Large ribosomal subunit protein bL31 (73 aa).

This sequence belongs to the bacterial ribosomal protein bL31 family. Type A subfamily. In terms of assembly, part of the 50S ribosomal subunit.

Functionally, binds the 23S rRNA. This chain is Large ribosomal subunit protein bL31, found in Mesorhizobium japonicum (strain LMG 29417 / CECT 9101 / MAFF 303099) (Mesorhizobium loti (strain MAFF 303099)).